The chain runs to 165 residues: Protein SprT (165 aa).

In terms of domain architecture, SprT-like spans 22 to 163; the sequence is LAQANLKLDR…RCVHCGEPLV (142 aa). His78 serves as a coordination point for Zn(2+). The active site involves Glu79. His82 provides a ligand contact to Zn(2+).

The protein belongs to the SprT family. Zn(2+) is required as a cofactor.

The protein resides in the cytoplasm. The chain is Protein SprT from Salmonella paratyphi A (strain ATCC 9150 / SARB42).